The sequence spans 775 residues: Acetamidase regulatory protein (775 aa).

The segment covering Met-1–Gly-15 has biased composition (polar residues). The segment at Met-1–Lys-20 is disordered. The zn(2)-C6 fungal-type DNA-binding region spans Cys-26–His-59. Over residues Pro-126–Arg-153 the composition is skewed to polar residues. Disordered regions lie at residues Pro-126–Arg-159 and Ala-630–Gln-699. Over residues Ala-630–Asn-644 the composition is skewed to basic and acidic residues. Over residues Pro-674–Pro-689 the composition is skewed to pro residues.

The protein localises to the nucleus. Functionally, positively regulates the expression of genes involved in the catabolism of certain amides, omega amino acids, and lactams. This chain is Acetamidase regulatory protein (amdR), found in Aspergillus oryzae (strain ATCC 42149 / RIB 40) (Yellow koji mold).